A 1182-amino-acid polypeptide reads, in one-letter code: Rho GTPase-activating protein 20 (1182 aa).

The tract at residues 1 to 40 (MEAMSPQQDALGAQPGRSSSLTGMSRIAGGPGTKKKMKTL) is disordered. Ser46 is subject to Phosphoserine. The region spanning 85–185 (TLLIDGPVEL…WLSLLQRYIA (101 aa)) is the PH domain. The Ras-associating domain occupies 194–283 (KSIPLKIFAK…TALLTQGSRD (90 aa)). The 187-residue stretch at 365 to 551 (VSLPDLCEND…FLIENCCRVF (187 aa)) folds into the Rho-GAP domain. 2 positions are modified to phosphoserine: Ser704 and Ser730. 6 disordered regions span residues 745–772 (QTQP…KRNT), 803–839 (VASY…QKSS), 935–955 (SYSS…SSQD), 982–1011 (TQRK…GQAS), 1074–1101 (LPSC…EGPG), and 1142–1182 (SGGQ…GTDI). A compositionally biased stretch (polar residues) spans 758–772 (KQSSVTGTDVSKRNT). A compositionally biased stretch (basic and acidic residues) spans 811–824 (SQDHPRKQAFDADP).

Its function is as follows. GTPase activator for the Rho-type GTPases by converting them to an inactive GDP-bound state. This Mus musculus (Mouse) protein is Rho GTPase-activating protein 20 (Arhgap20).